Here is a 1716-residue protein sequence, read N- to C-terminus: MDQEGGGDGQKAPSFQWRNYKLIVDPALDPALRRPSQKVYRYDGVHFSVSDSKYTPVEDLQDPRCHVRSKARDFSLPVPKFKLDEFYIGQIPLKEVTFARLNDNVRETFLKDMCRKYGEVEEVEILLHPRTRKHLGLARVLFTSTRGAKETVKNLHLTSVMGNIIHAQLDIKGQQRMKYYELIVNGSYTPQTVPTGGKALSEKFQGSGAAAETTEARRRSSSDTAAYPAGTTVGGTPGNGTPCSQDTNFSSSRQDTPSSFGQFTPQSSQGTPYTSRGSTPYSQDSAYSSSTTSTSFKPRRSENSYQDSFSRRHFSTSSAPATTATATSATAAATAASSSSSSSSSSSSSSSSSSSASQFRGSDSSYPAYYESWNRYQRHTSYPPRRATREDPSGASFAENTAERFPPSYTSYLAPEPNRSTDQDYRPPASEAPPPEPPEPGGGGGGSGGGGGGGGGGGGGAPSPEREEARTPPRPASPARSGSPAPETTNESVPFAQHSSLDSRIEMLLKEQRSKFSFLASDTEEEEENSSAGPGARDAGAEVPSGAGHGPCTPPPAPANFEDVAPTGSGEPGAARESPKANGQNQASPCSSGEDMEISDDDRGGSPPPAPTPPQQPPPPPPPPPPPPPPYLASLPLGYPPHQPAYLLPPRPDGPPPPEYPPPPPPPPPHIYDFVNSLELMDRLGAQWGGMPMSFQMQTQMLTRLHQLRQGKGLTAASAGPPGGAFGEAFLPFPPPQEAAYGLPYALYTQGQEGRGSYSREAYHLPLPMAAEPLPSSSVSGEEARLPHREEAEIAESKVLPSAGTVGRVLATLVQEMKSIMQRDLNRKMVENVAFGAFDQWWESKEEKAKPFQNAAKQQAKEEDKEKMKLKEPGMLSLVDWAKSGGITGIEAFAFGSGLRGALRLPSFKVKRKEPSEISEASEEKRPRPSTPAEEDEDDPEREKEAGEPGRPGTKPPKRDEERGKTQGKHRKSFTLDSEGEEASQESSSEKDEDDDDEDEEDEEQEEAVDATKKEAEASDGEDEDSDSSSQCSLYADSDGENGSTSDSESGSSSSSSSSSSSSSSSSSSESSSEEEEQSAVIPSASPPREVPEPLPAPDEKPETDGLVDSPVMPLSEKETLPTQPAGPAEEPPPSVPQPPAEPPAGPPDAAPRLDERPSSPIPLLPPPKKRRKTVSFSAAEEAPVPEPSTAAPLQAKSSGPVSRKVPRVVERTIRNLPLDHASLVKSWPEEVARGGRNRAGGRVRSTEEEEATESGTEVDLAVLADLALTPARRGLATLPTGDDSEATETSDEAERPSPLLSHILLEHNYALAIKPPPTTPAPRPLEPAPALAALFSSPADEVLEAPEVVVAEAEEPKQQLQQQHPEQEGEEEEEDEEEESESSESSSSSSSDEEGAIRRRSLRSHTRRRRPPLPPPPPPPPSFEPRSEFEQMTILYDIWNSGLDLEDMSYLRLTYERLLQQTSGADWLNDTHWVQHTITNLSTPKRKRRPQDGPREHQTGSARSEGYYPISKKEKDKYLDVCPVSARQLEGGDTQGTNRVLSERRSEQRRLLSAIGTSAIMDSDLLKLNQLKFRKKKLRFGRSRIHEWGLFAMEPIAADEMVIEYVGQNIRQMVADMREKRYVQEGIGSSYLFRVDHDTIIDATKCGNLARFINHCCTPNCYAKVITIESQKKIVIYSKQPIGVDEEITYDYKFPLEDNKIPCLCGTESCRGSLN.

The interaction with WDR82 stretch occupies residues 60-89 (LQDPRCHVRSKARDFSLPVPKFKLDEFYIG). Positions 84–172 (DEFYIGQIPL…NIIHAQLDIK (89 aa)) constitute an RRM domain. Disordered stretches follow at residues 194 to 367 (PTGG…SSYP), 380 to 499 (TSYP…AQHS), 516 to 670 (FSFL…PPPH), 849 to 869 (AKPF…EKMK), 911 to 1206 (KRKE…SRKV), 1230 to 1259 (EEVA…GTEV), and 1275 to 1297 (GLAT…AERP). Low complexity predominate over residues 222 to 231 (SDTAAYPAGT). Residues 243-277 (CSQDTNFSSSRQDTPSSFGQFTPQSSQGTPYTSRG) show a composition bias toward polar residues. Composition is skewed to low complexity over residues 278-295 (STPY…TSTS) and 315-357 (STSS…SSAS). Residues 430-440 (SEAPPPEPPEP) show a composition bias toward pro residues. Over residues 441 to 461 (GGGGGGSGGGGGGGGGGGGGA) the composition is skewed to gly residues. Ser477 is subject to Phosphoserine. Positions 477–487 (SPARSGSPAPE) are enriched in low complexity. The span at 488-499 (TTNESVPFAQHS) shows a compositional bias: polar residues. Ser521 and Ser578 each carry phosphoserine. The segment covering 581–591 (ANGQNQASPCS) has biased composition (polar residues). 2 stretches are compositionally biased toward pro residues: residues 606-631 (SPPP…PPPY) and 638-670 (GYPP…PPPH). Positions 859 to 869 (QAKEEDKEKMK) are enriched in basic and acidic residues. A Phosphoserine modification is found at Ser930. Acidic residues-rich tracts occupy residues 991-1009 (KDED…EEAV) and 1018-1027 (ASDGEDEDSD). Residues 1028–1071 (SSSQCSLYADSDGENGSTSDSESGSSSSSSSSSSSSSSSSSSES) show a composition bias toward low complexity. Ser1110 is modified (phosphoserine). The segment covering 1130–1150 (EEPPPSVPQPPAEPPAGPPDA) has biased composition (pro residues). Positions 1283 to 1292 (DDSEATETSD) are enriched in acidic residues. The HCFC1-binding motif (HBM) signature appears at 1307–1311 (EHNYA). Disordered regions lie at residues 1355–1427 (EEPK…FEPR) and 1480–1508 (TNLS…SEGY). The segment covering 1369–1383 (EGEEEEEDEEEESES) has biased composition (acidic residues). Positions 1399–1412 (RRRSLRSHTRRRRP) are enriched in basic residues. Residues 1413–1424 (PLPPPPPPPPSF) show a composition bias toward pro residues. The interaction with CFP1 stretch occupies residues 1424 to 1459 (FEPRSEFEQMTILYDIWNSGLDLEDMSYLRLTYERL). Residues 1459 to 1546 (LLQQTSGADW…GTNRVLSERR (88 aa)) form an interaction with ASH2L, RBBP5 and WDR5 region. The short motif at 1501–1506 (GSARSE) is the WDR5 interaction motif (WIN) element. The RxxxRR motif motif lies at 1546 to 1551 (RSEQRR). An SET domain is found at 1577–1694 (KKLRFGRSRI…VDEEITYDYK (118 aa)). S-adenosyl-L-methionine is bound at residue Tyr1693. Positions 1700–1716 (NKIPCLCGTESCRGSLN) constitute a Post-SET domain.

The protein belongs to the class V-like SAM-binding methyltransferase superfamily. Component of the SET1A/COMPASS complex composed of the catalytic subunit SETD1A, WDR5, WDR82, RBBP5, ASH2L/ASH2, CXXC1/CFP1, HCFC1 and DPY30 homotrimer. Forms a core complex with the evolutionary conserved subcomplex WRAD composed of WDR5, RBBP5, ASH2L/ASH2 and DPY30 subunits; WRAD differentially stimulates the methyltransferase activity. Interacts with BOD1L1 (via COMPASS-Shg1 domain) at replication forks. Interacts with HCFC1. Interacts with ASH2/ASH2L. Interacts with CXXC1/CFP1. Interacts with RBBP5. Interacts (via N-terminal region) with WDR82; the interaction is direct. Interacts (via the RRM domain) with hyperphosphorylated C-terminal domain (CTD) of RNA polymerase II large subunit (POLR2A) only in the presence of WDR82. Binds specifically to CTD heptad repeats phosphorylated on 'Ser-5' of each heptad. Interacts with ZNF335. Interacts with SUPT6H. Interacts with NAP1L1. Interacts (via WIN motif) with WDR5.

The protein resides in the nucleus. It is found in the nucleus speckle. It localises to the chromosome. Its subcellular location is the cytoplasm. The enzyme catalyses L-lysyl(4)-[histone H3] + S-adenosyl-L-methionine = N(6)-methyl-L-lysyl(4)-[histone H3] + S-adenosyl-L-homocysteine + H(+). It carries out the reaction N(6)-methyl-L-lysyl(4)-[histone H3] + S-adenosyl-L-methionine = N(6),N(6)-dimethyl-L-lysyl(4)-[histone H3] + S-adenosyl-L-homocysteine + H(+). The catalysed reaction is N(6),N(6)-dimethyl-L-lysyl(4)-[histone H3] + S-adenosyl-L-methionine = N(6),N(6),N(6)-trimethyl-L-lysyl(4)-[histone H3] + S-adenosyl-L-homocysteine + H(+). Functionally, histone methyltransferase that catalyzes methyl group transfer from S-adenosyl-L-methionine to the epsilon-amino group of 'Lys-4' of histone H3 (H3K4) via a non-processive mechanism. Part of chromatin remodeling machinery, forms H3K4me1, H3K4me2 and H3K4me3 methylation marks at active chromatin sites where transcription and DNA repair take place. Responsible for H3K4me3 enriched promoters and transcriptional programming of inner mass stem cells and neuron progenitors during embryogenesis. Required for H3K4me1 mark at stalled replication forks. Mediates FANCD2-dependent nucleosome remodeling and RAD51 nucleofilaments stabilization at reversed forks, protecting them from nucleolytic degradation. Does not methylate 'Lys-4' of histone H3 if the neighboring 'Lys-9' residue is already methylated. Has RNA binding activity towards transcripts involved in RNA processing and the DNA damage response. This Mus musculus (Mouse) protein is Histone-lysine N-methyltransferase SETD1A (Setd1a).